Here is a 608-residue protein sequence, read N- to C-terminus: Sensor protein kinase WalK (608 aa).

The next 2 membrane-spanning stretches (helical) occupy residues 14–34 and 183–203; these read LVIV…LYFT and IFIV…FFIA. The region spanning 204 to 256 is the HAMP domain; that stretch reads RTITKPITDMRNQTVEMSRGNYTQRVKIYGNDEIGELALAFNNLSKRVQEAQA. The 71-residue stretch at 261-331 folds into the PAS domain; sequence EKRRLDSVIT…EIQENNDSFL (71 aa). Zn(2+)-binding residues include His271, Asp274, His364, and Glu368. The region spanning 314 to 378 is the PAC domain; it reads LEDEFKLEEI…QQQVERERRE (65 aa). In terms of domain architecture, Histidine kinase spans 382 to 600; it reads NVSHELRTPL…SIFITLPCEV (219 aa). Residue His385 is modified to Phosphohistidine; by autocatalysis.

As to quaternary structure, forms homodimers. Forms homooligomers. Post-translationally, autophosphorylated.

The protein resides in the cell membrane. The enzyme catalyses ATP + protein L-histidine = ADP + protein N-phospho-L-histidine.. With respect to regulation, by zinc. Zinc-binding negatively regulates WalK kinase activity and thus autophosphorylation. Functionally, member of the two-component regulatory system WalK/WalR that regulates genes involved in cell wall metabolism, virulence regulation, biofilm production, oxidative stress resistance and antibiotic resistance via direct or indirect regulation of autolysins. Functions as a sensor protein kinase which is autophosphorylated at a histidine residue in the dimerization domain and transfers its phosphate group to the conserved aspartic acid residue in the regulatory domain of WalR. In turn, WalR binds to the upstream promoter regions of the target genes to positively and negatively regulate their expression. The protein is Sensor protein kinase WalK (walK) of Staphylococcus aureus (strain MRSA252).